Here is a 215-residue protein sequence, read N- to C-terminus: Pyrrolidone-carboxylate peptidase (215 aa).

Active-site residues include Glu-78, Cys-141, and His-165.

This sequence belongs to the peptidase C15 family. In terms of assembly, homotetramer.

The protein localises to the cytoplasm. It carries out the reaction Release of an N-terminal pyroglutamyl group from a polypeptide, the second amino acid generally not being Pro.. Functionally, removes 5-oxoproline from various penultimate amino acid residues except L-proline. The chain is Pyrrolidone-carboxylate peptidase from Streptococcus pyogenes serotype M12 (strain MGAS2096).